The following is a 448-amino-acid chain: uncharacterized protein (448 aa).

A run of 12 helical transmembrane segments spans residues 14–34 (PFIIGTIAIALFTDLFLYGII), 59–79 (TLLAVYAVANIAASSPIGFLA), 87–107 (VPMLIGLIFLTSATALLTFGN), 120–140 (GLSAAVVWTVGLALLVDVVGA), 148–168 (GGIFGFISLGEIIAPVFGGIV), 171–191 (SLGYYASFGVCFIILLLDIAL), 250–270 (IFGPFWTSFVNSCLFSAFDAT), 288–308 (LMFGVLSTPYFFCGAWAGAMV), 316–333 (IGKRAYAILGCTLFLLCI), 338–358 (TSLNIYLFSAFLAINGVVLAF), 392–412 (FSAYNIVYSLGMIIGPLVAGF), and 417–437 (FNFITSIACLSLLCFSASLMA).

Belongs to the major facilitator superfamily. TCR/Tet family.

The protein resides in the endoplasmic reticulum. The protein localises to the membrane. This is an uncharacterized protein from Schizosaccharomyces pombe (strain 972 / ATCC 24843) (Fission yeast).